Consider the following 5875-residue polypeptide: MDPDLLLAIALSESLMDNNNNNNNNNNNNNNNNNNNNNNNNNNNSNNNNNKNVEMGEAEKQPPEDKISTYFKELTGLLKKDTIVKNLKPLLALLKSKELLLDQIYFLSKILESISFNIVFNGKEKDKVENEFEIFCKDTIEFCLNILEKWGNGDIDLSTIPNINNNNNNDNNSNNKTDDNNQSNNSKKLTPLTLLSVIDMLCCIEFPSTEIDKTFDNIPSFLNVSELDEILDSNNQDNKENKKEDKESSKPIASSPIPITTTNIEKPTIATTTTTSTSNSNIFSQFLNEGLKVEGLNETMIPSFKPSTLPPPPPTPTSTITTQPLPSSTITQPESYSNCGNGEGGMETFAKVNSNYFNNKLFGSSRLLSICSKLLVPYHADLTSPSTVEKFETFKKNQTLIQDFMSNVQDIIFSEGFDSLDKQTAPWTIDFLGNLIGTLRSFQSFSISNNLSYYNNDSKFLSKHLFENIFEVLGSKLDYPGLQIKAEIFFSLCILSDVNKMKIDIVKLLERDQSTPLDKEYLVLNPQLIILAIDLVFKNIREITEIQNNNNNNNNVDFNELLKIDSTVDQSTITGVEKPTTKFLLSEPLDGTGVEGWFDFSNENKQLFSKDSLFKLFIKPQLLDTLFNILYLCYFKPTKSTTTTTTATTTTTTTTTNESIPMETTRSSTPIPIVNNNNNNNDSKSNSKKSPPIKINDSYFGEDDLFGGLFDQSSTSIRSSSNKVNEGTPKSSTTTTTTNATIISTPANSNIKESSNDDGDHDEDIMKCKIFNLLSFIYLLQDDPMYKEFTKNHLTLTHLRILFTLIAPSSNPSIMAPKSKNSTVFKLLTNICFLLCKNSIISDTLLDQFIGFVFTSVDSQLLTLPKEQLAWIAWIFVKKQSTMVVGATNSVMVVSLWDGFLKNSSRVIREVSLVSSPFKEVISLDYILLLLFSFHTLDEKHRLGIVSTLCQSFNEIVCKVKSDQSFLPNSLMLSRCLMVFNYILFNFETVNPILSKLFNSQLLSFKKSNYQVGEFYKLSIVNLNYSGTIEKLIKKSAFINNDGLIGLPEFYDLYFIPPPNNTLTSPSKSINSSSNNILSPITPTNTTTTTTTTTPSTTSIPTNNEDWFNHSNNLEKITSLLQKSTNNDNCYEQFYNNIVSLCSLTPTVKSTQDGSSLDSLYFDYIVASSLKFLSCLPLSLSFLKAIKDPQTFTTVSNTSPIFITYLKSIYPSQCNNPEIPWLAHTENILTHFKYNGGTPSDSSLRVNGIVQSSLAYLTKVFDVGTSLNINKKLAESSGNVDTSGGGDSYFDGWESLFNDDDDEEEDEEEEEEMDEDDSENDEDEDSEESEKEQNKDNLKSSSSTVPTTTTTAAAATTTATATTKESTIRSNISTLLPSLINFIIDTLGHYRGIYKKSLIEQLSNHSNALHVKLIQELYILSSKTEVLEVMKSLDFSTDDRNTVEKWDEEYKPDPLVPKDQKQLFGWSVQPYNPSFTEGKVYSVALQSIIRLLLTLSNQALVHWDNVTETNPDSTKPILSKVSELIFEQVYISTDRSFSFLKDHYDNYSSLISGAQSGYLINQIKLANFESISKILIDPTFSPSNNSSNKFLSENSYLLTVLIGYVDSLISMSKLNGSHIYCYYISGFNGSVARGTRDFEFVLPTGNLQLLISVLFNNPCEKFNLKVLSALVHFMSISTPSEFFTSFRSHCITTFSKIPINDLKLWFEQKLLGINNFEKNSTATNGTEKMDIEIILNNNNNNNNKVEEKSGKINSTVSIQEQIIRLIGLLIGNKDLSCYSKDYLQQQAAAALAAKESEELLQQQLLQESEGKKKKRSSGSSTPTKIPGKKTPITSGQDSNSSPALTASSSPPSLEFVDWDEKVTSFALTLFDVLLSSLNNAFTVWIDQPKLLKGYFELLQFIAMGQHQLLKLFNEISNLSSPLLTNPTIDQLESLNLLVEFIENILDLSKSLKKPSSDQQHHSGGCHHSNHHHHHHHSRKDEVMVDKSSITNVVDEDILKDDVEVMDEEDEDELQYLSEDEKVVNGNENTGEEDDEERKLSSKVCTYTFTKNDYIDQHWYFCYTCGLKFSEGCCSVCVKVCHKGHQVSYSRYSRFFCDCGAGAGKGNPCKALKPRLYSPPKQLQQQQQQQQPQQPPQDQQKNVAAEQQPQQQQEEQQVASTTSSATNTNDQPIIPDSLSSSSSNSSPSFNNNNNNNNNGTTGSGNTFSSINNYFFNLPTQQDKEQLFNEIFNDKSNIISKLSELYPKLIEMYKKVQTDLIKPQSDSNSNKLEVFEESSTQSISSREIISKTDIFTTKKVSKNGTFEAKLKLEGVEGNQLKTFLSSGPIQRKAIASTSKGLLAIAEGDSVSLFNSSKILDDDAQLDKHSFSKALSKSSVAYPIVSMVFNPLNERFLAVVGFKEVKILTINQKDEIVDQLVIDLSLDALGETIYIIKVEWIIGSQVELAIVTNEFIKIYDLSKDNLSPIHFFSLLEDSIKDMCLVQKNGKNHILALSNYGLLYFQAIEDSIDNESCIMIETLQVPINKISAGVSVHYNIDLDLVIASYTNGECYAFQVNDTMTNVTRSFPIMDPAKKLPMPAQYFINLSPMFPNVYACLAARGGYLLGFKMGTKDISIQNLKLTQRVEGMTILNRSSPKLLILFDDGSIGRYDFNLENTIQQPLPTTSTTTDSINESDKKGLDILLYLKSKYQDSINKNNSGSSINSSGNNVATVSSSTTSTSAVIKSPPPLSSLLLQPTTTTTTSPVFPIDFFESTECITPNVKYGGDPLQWFSQDVIKQKLASNDEYIVCQSLETLTLVIMNNNFNNAICGIRILVGNASTKHIPTEIRVFNRTIQLKEGQRRWYDIPFTTEETLRSIKKVSFTAGSTFTMGTSPIIDQVEVYAKNKDSLGFNDSDDSDDEFPTVDENVTSSGLSTSAGGSGGGVAGTNDSTADKHTPLEIVILHCFNSLKNYFSNHVANDDSQKFIELKEKTLSILPSMITDSQLSFVRSSIKKLLKILSTNSEHYQTLKHSIQLKYASQTVSSILSNSGGTIPNSADLEKLDYLVAALKKISSSNPNNLEKYLFKDHPNFLSDLLTIYRNTTSPSSSKGKSSSASASSSSSTTTATSTLPSNTQSGSNNGAVSSNALLYSDSFISNLVQLLWNCQRSKIFSTDLIFTLLKSLLSHSNEIIRTRSSLILVSFISKSGNNSTVANLLPPPSSSSNENVVDNDNTNKENEGDIQMVDEVLFSCDLCNINPITGKRWNCSNCGDFDLCNQCYQNPEKDHPKDHIFKEFIIDEPMKDGDEKESTNEPPQQQKQQDQQLQQDLQDDSEYDEELKIAISMSLNNNNNNNNNNESMDTSTLTTTTTTTNKTTPTTNEEPMVGFIKLIIEEIIVSYEKGFSFMIPYMQILYSTILHNTTFILNNNQLSNQLVTTLVNLISKHKSNLSKFLSTKSNNLEGDILIFSLLSLLLDSDEQKRQKIQSKQTTTTAAAAATTTTTATATVTTPSVVTTPHSLPSTLIYHLSKLFIDRDIIQLLRLWIEQLYTCISESHGLSVGEERDSPFGALLVPSIDENQTLPKNRFTPFFGKYLPQSMGSIHLLLSKAIFKLMITFYRCERRKKSITQTTPTLIKPSEWTNLICSFIHSKKTVSIVKYPKKLLFLIYQTKSSYYSIRDEFLLKKKFAGILDLEGKTKGFSDEIGYDHLAKLISYLTLMLEVASDRPKSWQFFCAHNDVLPKLYKILFNLAEEPSSLLLELLTYVFVDEIAEQPLSSTSQDTQQESSNNNNNNNSNDILMQDVDTKAKHISIFLQEQYFNVLIFNILLESNSSDLRSIASSFIYYLWRSSNNEQRIFINKSLWSKLNNVASYGKNASEFMDLLTYFLNETDSQSWKDQHNEFSNKLIESFKQQNQISLNHPNSQIYNSLGKILEFDGYYLESEPCLVCNNPEVQYQTSRLESLKQEVKFSEYSQLIKFNGVYNISKIMIQLHDVKKGKMIKTINLFYNNKPVADIGDLKGKFNQWKKLKQVHFTPSQTEKAVVFQIPISARNFMIEYFDFHDNLQAASSEKLQCPRCSRIVTDKHGICKNCHENAYQCKHCRNINYENLDAFLCNECGFCKHAKFDYSFVCKPTIAIEKIENQEDHKRAIQTIEKESENAHKKYQRLIGFKKVISGLINSFETQEPWSKDDLIKSSGGTISIANTSTNSTGSNNQSINSSSGNISTNSSSSSSSSFGISNQSSSGNGGGGVGSGGGGVINQSGTSNNSSFLTLRINKKIGYLSRLYERECRNIYEGLSKSVQILQTNRMEISKYMNFISGGGQPSSNDKQQQQQQQQQQSSRQCPVSIHLREENKCYGCSNSYIEQVLCLLNSFCRNSELTPIKNLLIEKGLPKEIFFNNIHHGKSIAKGWAKSSLSYLTKSNIDCTSMVNQWIKDKIYYTLCYYSSLDVPNMVSSEISLLKECSSLSDNIWPQRLSFIMELFFKALSSGSQSPVVSEYIILPCLKIIIYLCTLDRKGAFITKDAKDLEISQKLLATRFEKLKSSKKQAIALAATATATATAANASLTSTIEKKIEALSSLLSPNTVNNIALSVASSLLSPQQMQLQIQQQIALQQQQIQQQIQQQQQQLNESVSGLKILSPSSSSSSPSGVGATGSENGGGGSGSSSGSSVSGSGSISSSQDPNILSIFDNDTSNAGANESWDGDDNPIANAWSSKYENYLSNFNVNSSIGEISKSLKPLSQDELKSKYFKRWYAQVKKRKQQQQQQSSGIGYATQSSFEVLFEEKWLEKLLFNSTSSIRLEIITLMGILSKNSNSRSLKFLDLLTKILPNATEAGEYSAEFFGLFNSFISTSQDRKIYLAVKGFIPFICDAIIKEIEHIKSKEGSFSTDVSQGFVLKTLVAILKSFLDVPTLKAKMKKDNMLEKVLDAFLSLRGVIVQKNKLTEDSVRYLQELMKSLNNESVQDNKKFMAANIKALAKYQSDGRTPIFIFEQLCNIVCPTKPDPIYQLILFKAASQEEYIRGSMNRNPYTSNTFGGPLMRDVKNKICKALDLGSFLDDDNGMELLVDNKIIKLDLPIKKVYELVWKKSPQALRTADINIPMNVVYRLQGLDGEATEEIIETLNDNNSEEKDPEVEYEITSVMAECGGLESMISMIERINDFSIEKELAQLVIKLLYHCCKIKINRQKLLTLNTVGRLLEKLKQAFHQPELSEHLLVIIESVVSEANRDYLRGSNSSTSLSHHKDINEAQEQMNMFLDKLNGAQVMSNPKIIQAITRIIPFLTYGHTEIMDYLVDFFTPYLNFQEFDDSKSKDTNHVYHLDFFTKLMENTRPDSNGRSIRSIIIKRGITKSLVDYLLNYFPENGDKTSQEWLSSLEKPALPFVLVLLKGLAMGHEPTQNMTLESNLIKRIHILEETAGTSAKIGSLAENLLESIAEGNEKTSKIVSDTRKESKMEKLSHAQKHREDVLKQLGLAQQGKHIMANVVPGSIEDLDDDEGFTCMVCREGYSFKPTDVLGIYTFSKRIPLTSVGETTCPPSSTTNVAASLSLSPSSSGGGGGGALYYGFTTVTHFNFIHFNCHRDATKADRSMKVPKEEWEGAALRNQQTKCNGLFPVLPPKMNSDAFTPYSDKFWVNLNNISRVEGPKFRILSHDLKFLLIRLAKDESFSTDSKGGGKESNIRIAPMFVQLGMFLLDQKLVGGNSANQLRRPQFEKTLAQFTTLPLETAITSMYQMLSDNVPYFLVVSIFLHSPKEFENQKFNYLTKLLAYAFVDYLTTNTKNGLSSPDEPSKDKLFDITRPWLIFFSLLSKFHSIIKPSSCTEENWIQETKNHLSTNCTKIQVDVKELLNCFENELKEFQDEMEFFDDEGLLKNVLLNNKDSNEYLLKLYKSVKSNKK.

Disordered regions lie at residues 17–64 (DNNN…QPPE), 164–185 (NNNN…QSNN), 232–276 (DSNN…TTTS), 302–342 (PSFK…CGNG), 642–693 (TTTT…SPPI), 716–740 (SIRS…TTNA), 1081–1101 (ITPT…TSIP), 1291–1367 (DGWE…KEST), 1806–1851 (QESE…SSPP), 1952–1982 (KKPS…KDEV), 2008–2036 (EDED…DDEE), 2109–2203 (KALK…TGSG), 2893–2930 (DSDD…TNDS), 3083–3119 (TSPS…SGSN), and 3195–3214 (LLPP…DNTN). Low complexity predominate over residues 18–52 (NNNNNNNNNNNNNNNNNNNNNNNNNNNSNNNNNKN). Over residues 237–249 (DNKENKKEDKESS) the composition is skewed to basic and acidic residues. Composition is skewed to low complexity over residues 250–276 (KPIA…TTTS), 317–333 (TSTI…ITQP), and 642–656 (TTTT…TTTT). The span at 657 to 669 (NESIPMETTRSST) shows a compositional bias: polar residues. Over residues 670–693 (PIPIVNNNNNNNDSKSNSKKSPPI) the composition is skewed to low complexity. Over residues 716–725 (SIRSSSNKVN) the composition is skewed to polar residues. Over residues 728-740 (TPKSSTTTTTTNA) the composition is skewed to low complexity. Positions 1297–1330 (FNDDDDEEEDEEEEEEMDEDDSENDEDEDSEESE) are enriched in acidic residues. Positions 1300–1328 (DDDEEEDEEEEEEMDEDDSENDEDEDSEE) form a coiled coil. Low complexity-rich tracts occupy residues 1347-1363 (TTTT…TATT) and 1838-1851 (SNSS…SSPP). Basic residues predominate over residues 1963–1977 (GGCHHSNHHHHHHHS). A UBR-type zinc finger spans residues 2042 to 2113 (KVCTYTFTKN…KGNPCKALKP (72 aa)). 2 stretches are compositionally biased toward low complexity: residues 2118–2168 (PPKQ…TNTN) and 2178–2203 (SSSS…TGSG). Over residues 2893 to 2903 (DSDDSDDEFPT) the composition is skewed to acidic residues. Positions 2908-2917 (VTSSGLSTSA) are enriched in low complexity. Residues 3201 to 3211 (SSSNENVVDND) are compositionally biased toward low complexity. A ZZ-type zinc finger spans residues 3226 to 3280 (EVLFSCDLCNINPITGKRWNCSNCGDFDLCNQCYQNPEKDHPKDHIFKEFIIDEP). Zn(2+)-binding residues include Cys-3231, Cys-3234, Cys-3246, Cys-3249, Cys-3255, Cys-3258, His-3266, and His-3270. 3 disordered regions span residues 3282-3312 (KDGD…QDDS), 3326-3359 (LNNN…PTTN), and 3754-3776 (SSTS…SNDI). Composition is skewed to low complexity over residues 3295 to 3307 (QQQK…LQQD) and 3327 to 3358 (NNNN…TPTT). One can recognise a UIM domain in the interval 3313–3332 (EYDEELKIAISMSLNNNNNN). Over residues 3754-3763 (SSTSQDTQQE) the composition is skewed to polar residues. The segment covering 3764-3774 (SSNNNNNNNSN) has biased composition (low complexity). Residues 4118-4146 (IENQEDHKRAIQTIEKESENAHKKYQRLI) adopt a coiled-coil conformation. Residues 4182–4222 (NTSTNSTGSNNQSINSSSGNISTNSSSSSSSSFGISNQSSS) show a composition bias toward low complexity. Disordered regions lie at residues 4182–4237 (NTST…GGVI), 4295–4323 (FISG…RQCP), and 4616–4671 (KILS…FDND). Positions 4223 to 4236 (GNGGGGVGSGGGGV) are enriched in gly residues. Positions 4308 to 4317 (QQQQQQQQQQ) are enriched in low complexity. Residues 4585 to 4618 (QIQQQIALQQQQIQQQIQQQQQQLNESVSGLKIL) are a coiled coil. Composition is skewed to low complexity over residues 4619–4635 (SPSS…ATGS) and 4645–4659 (SSGS…ISSS). Residues 5357 to 5870 (PALPFVLVLL…EYLLKLYKSV (514 aa)) form a UBR4 E3 catalytic module region. The HemiRING-type zinc-finger motif lies at 5476–5620 (GFTCMVCREG…WVNLNNISRV (145 aa)). Zn(2+) contacts are provided by Cys-5479, Cys-5482, His-5554, and Cys-5557. Residues 5623-5870 (PKFRILSHDL…EYLLKLYKSV (248 aa)) form the UZI domain. The stretch at 5819–5846 (QVDVKELLNCFENELKEFQDEMEFFDDE) forms a coiled coil.

Belongs to the UBR4 family.

The protein operates within protein modification; protein ubiquitination. Functionally, probable E3 ubiquitin-protein ligase. The chain is Probable E3 ubiquitin-protein ligase DDB_G0283893 from Dictyostelium discoideum (Social amoeba).